Reading from the N-terminus, the 137-residue chain is Probable DNA-directed RNA polymerases I, II, and III subunit RPABC2 (137 aa).

Acidic residues-rich tracts occupy residues 1 to 27 and 34 to 43; these read MADE…VIEE and NEDEDDDNVD. Residues 1–43 form a disordered region; that stretch reads MADEDDYQDMDNDDFVDDNEMEDVIEEDPQRPDNEDEDDDNVD.

Belongs to the archaeal Rpo6/eukaryotic RPB6 RNA polymerase subunit family. As to quaternary structure, component of the RNA polymerase I (Pol I), RNA polymerase II (Pol II) and RNA polymerase III (Pol III) complexes consisting of at least 13, 12 and 17 subunits, respectively.

The protein resides in the nucleus. In terms of biological role, DNA-dependent RNA polymerases catalyze the transcription of DNA into RNA using the four ribonucleoside triphosphates as substrates. Common component of RNA polymerases I, II and III which synthesize ribosomal RNA precursors, mRNA precursors and many functional non-coding RNAs, and small RNAs, such as 5S rRNA and tRNAs, respectively. Pol II is the central component of the basal RNA polymerase II transcription machinery. Pols are composed of mobile elements that move relative to each other. In Pol II, RPB6 is part of the clamp element and together with parts of RPB1 and RPB2 forms a pocket to which the RPB4-RPB7 subcomplex binds. This Caenorhabditis elegans protein is Probable DNA-directed RNA polymerases I, II, and III subunit RPABC2 (rpb-6).